Consider the following 723-residue polypeptide: Epidermal growth factor receptor kinase substrate 8-like protein 1 (723 aa).

The 130-residue stretch at 35–164 (QYPVNHLVTF…LHNYRSGRGE (130 aa)) folds into the PTB domain. Residues 162–183 (RGERRAAALRATQEELQRDRSP) show a composition bias toward basic and acidic residues. 4 disordered regions span residues 162 to 247 (RGER…PRGP), 442 to 477 (KQLQHERRRRQQSAPQVAVNGHRDLEPESEPQLESE), 537 to 589 (GPRL…GLDP), and 609 to 636 (LAQGRSGPSRAVPGPRAPEPQLSPGSDA). S182 is modified (phosphoserine). T187 bears the Phosphothreonine mark. One can recognise an SH3 domain in the interval 478–537 (TAGKWVLCNYDFQARNSSELSVKQRDVLEVLDDSRKWWKVRDPAGQEGYVPYNILTPYPG). Polar residues predominate over residues 543 to 552 (SQSPARSLNS). The span at 553 to 568 (TPPPPPAPAPAPPPAL) shows a compositional bias: pro residues. Positions 571–580 (PRWDRPRWDS) are enriched in basic and acidic residues. Positions 689-719 (VQRSLLEDKEKVSELEAVMEKQKKKVEGEVE) form a coiled coil.

Belongs to the EPS8 family. In terms of assembly, interacts with ABI1. Part of a complex that contains SOS1, ABI1 and EPS8L2. Associates with F-actin. As to expression, detected in placenta.

It localises to the cytoplasm. Stimulates guanine exchange activity of SOS1. May play a role in membrane ruffling and remodeling of the actin cytoskeleton. The protein is Epidermal growth factor receptor kinase substrate 8-like protein 1 (EPS8L1) of Homo sapiens (Human).